Reading from the N-terminus, the 489-residue chain is Protein SOF1 (489 aa).

WD repeat units follow at residues 65–105 (GHRD…EFVS), 113–158 (VTGL…YSNK), 177–214 (DGES…PVSD), 217–257 (WGAD…PTQK), 259–299 (VQTM…RSLN), 303–342 (DHVS…SREI), and 346–385 (KRMQ…RSNV). Basic and acidic residues-rich tracts occupy residues 440–459 (REAN…ERKK) and 466–489 (HKYE…TQEK). The disordered stretch occupies residues 440–489 (REANERRTRKDMPYISERKKQIVGTVHKYEDSGRDRKRRKEDDKRDTQEK).

The protein belongs to the WD repeat DCAF13/WDSOF1 family. In terms of assembly, interacts with snoRNA U3. Interacts with NOP1 and MPP10. Component of the ribosomal small subunit (SSU) processome composed of at least 40 protein subunits and snoRNA U3.

The protein resides in the nucleus. Its subcellular location is the nucleolus. Functionally, required for ribosomal RNA processing. This chain is Protein SOF1 (SOF1), found in Saccharomyces cerevisiae (strain ATCC 204508 / S288c) (Baker's yeast).